The sequence spans 287 residues: ATP synthase gamma chain (287 aa).

This sequence belongs to the ATPase gamma chain family. As to quaternary structure, F-type ATPases have 2 components, CF(1) - the catalytic core - and CF(0) - the membrane proton channel. CF(1) has five subunits: alpha(3), beta(3), gamma(1), delta(1), epsilon(1). CF(0) has three main subunits: a, b and c.

It is found in the cell inner membrane. In terms of biological role, produces ATP from ADP in the presence of a proton gradient across the membrane. The gamma chain is believed to be important in regulating ATPase activity and the flow of protons through the CF(0) complex. In Stenotrophomonas maltophilia (strain R551-3), this protein is ATP synthase gamma chain.